Here is a 201-residue protein sequence, read N- to C-terminus: Small ribosomal subunit protein uS4 (201 aa).

Positions Ser-91–Glu-151 constitute an S4 RNA-binding domain.

Belongs to the universal ribosomal protein uS4 family. As to quaternary structure, part of the 30S ribosomal subunit. Contacts protein S5. The interaction surface between S4 and S5 is involved in control of translational fidelity.

In terms of biological role, one of the primary rRNA binding proteins, it binds directly to 16S rRNA where it nucleates assembly of the body of the 30S subunit. Functionally, with S5 and S12 plays an important role in translational accuracy. The polypeptide is Small ribosomal subunit protein uS4 (Corynebacterium diphtheriae (strain ATCC 700971 / NCTC 13129 / Biotype gravis)).